A 293-amino-acid chain; its full sequence is tRNA pseudouridine synthase B (293 aa).

Aspartate 38 acts as the Nucleophile in catalysis.

The protein belongs to the pseudouridine synthase TruB family. Type 1 subfamily.

The enzyme catalyses uridine(55) in tRNA = pseudouridine(55) in tRNA. Responsible for synthesis of pseudouridine from uracil-55 in the psi GC loop of transfer RNAs. The protein is tRNA pseudouridine synthase B of Microcystis aeruginosa (strain NIES-843 / IAM M-2473).